A 585-amino-acid chain; its full sequence is Putative phospholipase B-like 2 (585 aa).

A signal peptide spans 1–35 (MAAPMDRTHGGRAARALRRALALASLAGLLLSGLA). 3 N-linked (GlcNAc...) asparagine glycosylation sites follow: Asn-84, Asn-102, and Asn-106. An intrachain disulfide couples Cys-138 to Cys-148. N-linked (GlcNAc...) asparagine glycans are attached at residues Asn-227 and Asn-432. A disulfide bridge links Cys-488 with Cys-491. Asn-511 carries an N-linked (GlcNAc...) asparagine glycan.

The protein belongs to the phospholipase B-like family. As to quaternary structure, interacts with IGF2R. Post-translationally, glycosylated; contains mannose 6-phosphate sugars.

The protein resides in the lysosome lumen. Putative phospholipase. The polypeptide is Putative phospholipase B-like 2 (Plbd2) (Rattus norvegicus (Rat)).